The sequence spans 65 residues: Neuropeptide-like protein 28 (65 aa).

A signal peptide spans 1 to 22 (MISTSSILILVFLLACFMATSA). A tyrosine amide mark is found at Y29, Y39, Y47, and Y55. W63 bears the Tryptophan amide mark.

The protein belongs to the YARP (YGGW-amide related peptide) family.

The protein resides in the secreted. In terms of biological role, may have antimicrobial activity. This Caenorhabditis elegans protein is Neuropeptide-like protein 28 (nlp-28).